The sequence spans 217 residues: Urease accessory protein UreE (217 aa).

Residues 148–217 form a disordered region; the sequence is AYGEAAAHGH…DHDHGSGHHH (70 aa). Residues 160–171 show a composition bias toward basic and acidic residues; that stretch reads AGHDHAHDHDHG. Positions 193-202 are enriched in low complexity; sequence AAAPAPHVHG. A compositionally biased stretch (basic and acidic residues) spans 206–217; it reads GHDHDHGSGHHH.

This sequence belongs to the UreE family.

It is found in the cytoplasm. Functionally, involved in urease metallocenter assembly. Binds nickel. Probably functions as a nickel donor during metallocenter assembly. This chain is Urease accessory protein UreE, found in Methylibium petroleiphilum (strain ATCC BAA-1232 / LMG 22953 / PM1).